A 1249-amino-acid chain; its full sequence is Myosin-1 (1249 aa).

Residues 1 to 42 (MGHSRRPAGGEKKSRGFGRSKAVADVGDGRQTGGKPQVKKAT) form a disordered region. Residues 51-730 (IGVSDLTLLS…TLFALEAMRD (680 aa)) form the Myosin motor domain. 144-151 (GESGAGKT) is a binding site for ATP. The residue at position 372 (Ser372) is a Phosphoserine. The tract at residues 419–501 (SIGILDIYGF…PGVFAALNDA (83 aa)) is actin-binding. 2 IQ domains span residues 734–754 (HNMA…RTEC) and 755–780 (AIRI…QGHQ). In terms of domain architecture, TH1 spans 788–978 (RRRMSLLGSR…TIHTGPGEPA (191 aa)). Disordered stretches follow at residues 962–1079 (DDSY…PKKP) and 1126–1249 (WTPE…DDDW). Positions 1021-1035 (AAQPLPRATPQPAEP) are enriched in pro residues. Residues 1036 to 1051 (QPAARAVPQPVAAVAA) are compositionally biased toward low complexity. Composition is skewed to pro residues over residues 1064–1077 (APPP…PAPK) and 1139–1150 (TPKPAPPPPPAA). Residues 1076–1137 (PKKPTAKVLY…PEAYLEEQVA (62 aa)) form the SH3 domain. The span at 1151-1169 (PRSTPAPATNGAAAAAKAK) shows a compositional bias: low complexity. Polar residues predominate over residues 1200–1221 (VSMNSHDSSGGSGRGTPNSMSN). Residues 1222-1231 (ASLAGGLAEA) show a composition bias toward low complexity.

The protein belongs to the TRAFAC class myosin-kinesin ATPase superfamily. Myosin family. Post-translationally, phosphorylation of the TEDS site (Ser-372) is required for the polarization of the actin cytoskeleton. Phosphorylation probably activates the myosin-I ATPase activity.

The protein localises to the cytoplasm. The protein resides in the cytoskeleton. Its subcellular location is the actin patch. Type-I myosin implicated in the organization of the actin cytoskeleton. Required for proper actin cytoskeleton polarization. At the cell cortex, assembles in patch-like structures together with proteins from the actin-polymerizing machinery and promotes actin assembly. Functions as actin nucleation-promoting factor (NPF) for the Arp2/3 complex. Plays an important role in polarized growth, spore germination, hyphal morphogenesis, and septal wall formation. The sequence is that of Myosin-1 (myoA) from Aspergillus fumigatus (strain ATCC MYA-4609 / CBS 101355 / FGSC A1100 / Af293) (Neosartorya fumigata).